A 292-amino-acid chain; its full sequence is Diaminopimelate epimerase (292 aa).

The substrate site is built by Asn-13, Gln-46, and Asn-66. Residue Cys-75 is the Proton donor of the active site. Substrate-binding positions include 76–77 (GN), Asn-166, Asn-199, and 217–218 (ER). Residue Cys-226 is the Proton acceptor of the active site. Residue 227–228 (GT) participates in substrate binding.

Belongs to the diaminopimelate epimerase family. In terms of assembly, homodimer.

The protein localises to the cytoplasm. The enzyme catalyses (2S,6S)-2,6-diaminopimelate = meso-2,6-diaminopimelate. It functions in the pathway amino-acid biosynthesis; L-lysine biosynthesis via DAP pathway; DL-2,6-diaminopimelate from LL-2,6-diaminopimelate: step 1/1. Catalyzes the stereoinversion of LL-2,6-diaminopimelate (L,L-DAP) to meso-diaminopimelate (meso-DAP), a precursor of L-lysine and an essential component of the bacterial peptidoglycan. This chain is Diaminopimelate epimerase, found in Ralstonia nicotianae (strain ATCC BAA-1114 / GMI1000) (Ralstonia solanacearum).